The following is a 316-amino-acid chain: MSKLSHQQQRRIHNHRQNKLAAGDRADAALVVAHLGYQLIVDDHGEILAADWRQKLGAIAVNDRVLITRDQPQHAIVEGIYPREKTLYKQHAGKLKPVASNIDQLLITFAPVPDWQNALLDRFLVAAHQAHIEPAFFCNKSDLFDAQTFAAAENRLAIYHQLGYRVFYGSIYQKTGLEELTHWLSGRQTVICGQSGVGKSSFIHYLMPDIDVWTQAVSAARGFGQHTTRNARRYPLDAHTAIIDTPGVRGFSLTHLQHSEVVSGFPEIHQYTHECRFNDCSHQHEPDCGVQRALERGDISLERFNSMMQICAEREV.

Residues 1-20 (MSKLSHQQQRRIHNHRQNKL) are disordered. A compositionally biased stretch (basic residues) spans 8–18 (QQRRIHNHRQN). One can recognise a CP-type G domain in the interval 92-251 (AGKLKPVASN…IIDTPGVRGF (160 aa)). Residues 139 to 142 (NKSD) and 193 to 201 (GQSGVGKSS) each bind GTP. Zn(2+) is bound by residues cysteine 275, cysteine 280, histidine 282, and cysteine 288.

The protein belongs to the TRAFAC class YlqF/YawG GTPase family. RsgA subfamily. As to quaternary structure, monomer. Associates with 30S ribosomal subunit, binds 16S rRNA. Zn(2+) is required as a cofactor.

The protein localises to the cytoplasm. Its function is as follows. One of several proteins that assist in the late maturation steps of the functional core of the 30S ribosomal subunit. Helps release RbfA from mature subunits. May play a role in the assembly of ribosomal proteins into the subunit. Circularly permuted GTPase that catalyzes slow GTP hydrolysis, GTPase activity is stimulated by the 30S ribosomal subunit. In Dichelobacter nodosus (strain VCS1703A), this protein is Small ribosomal subunit biogenesis GTPase RsgA.